Consider the following 235-residue polypeptide: NAD(P)H-quinone oxidoreductase subunit K, chloroplastic (235 aa).

Residues Cys43, Cys44, Cys108, and Cys139 each coordinate [4Fe-4S] cluster.

The protein belongs to the complex I 20 kDa subunit family. NDH is composed of at least 16 different subunits, 5 of which are encoded in the nucleus. It depends on [4Fe-4S] cluster as a cofactor.

The protein resides in the plastid. Its subcellular location is the chloroplast thylakoid membrane. The catalysed reaction is a plastoquinone + NADH + (n+1) H(+)(in) = a plastoquinol + NAD(+) + n H(+)(out). It catalyses the reaction a plastoquinone + NADPH + (n+1) H(+)(in) = a plastoquinol + NADP(+) + n H(+)(out). NDH shuttles electrons from NAD(P)H:plastoquinone, via FMN and iron-sulfur (Fe-S) centers, to quinones in the photosynthetic chain and possibly in a chloroplast respiratory chain. The immediate electron acceptor for the enzyme in this species is believed to be plastoquinone. Couples the redox reaction to proton translocation, and thus conserves the redox energy in a proton gradient. The protein is NAD(P)H-quinone oxidoreductase subunit K, chloroplastic of Ipomoea purpurea (Common morning glory).